We begin with the raw amino-acid sequence, 1255 residues long: Bifunctional autolysin (1255 aa).

An N-terminal signal peptide occupies residues 1 to 36; sequence MLGVINRMAKKFNYKLPSMVALTLVGSAVTAHQVQA. 2 disordered regions span residues 110–141 and 193–218; these read GDTR…NTNV and VTTF…KYKP. Positions 199–775 are N-acetylmuramoyl-L-alanine amidase; it reads SAQPRSVAAT…VAQPKTAVKA (577 aa). GW domains are found at residues 442 to 516, 518 to 592, 611 to 685, 687 to 761, 783 to 858, 860 to 935, and 942 to 1016; these read TVAA…YNTA, SPVN…DTAK, TVSS…YNNA, SPVN…VPAA, TTQT…VQNL, KEVK…APTA, and AAKD…KELI. Positions 776–1255 are endo-beta-N-acetylglucosaminidase; it reads YTVTKPQTTQ…GKYFDIPQYK (480 aa).

This sequence in the N-terminal section; belongs to the N-acetylmuramoyl-L-alanine amidase 2 family. It in the C-terminal section; belongs to the glycosyl hydrolase 73 family. Oligomer; forms a ring structure at the cell surface which is important for efficient partitioning of daughter cells after cell division. Undergoes proteolytic processing to generate the two extracellular lytic enzymes, probably at the septal region on the cell surface.

The protein localises to the secreted. It carries out the reaction Hydrolyzes the link between N-acetylmuramoyl residues and L-amino acid residues in certain cell-wall glycopeptides.. The enzyme catalyses an N(4)-(oligosaccharide-(1-&gt;3)-[oligosaccharide-(1-&gt;6)]-beta-D-Man-(1-&gt;4)-beta-D-GlcNAc-(1-&gt;4)-alpha-D-GlcNAc)-L-asparaginyl-[protein] + H2O = an oligosaccharide-(1-&gt;3)-[oligosaccharide-(1-&gt;6)]-beta-D-Man-(1-&gt;4)-D-GlcNAc + N(4)-(N-acetyl-beta-D-glucosaminyl)-L-asparaginyl-[protein]. Endohydrolysis of the di-N-acetylchitobiosyl unit in high-mannose glycopeptides and glycoproteins containing the -[(Man)5(GlcNAc)2]-Asn structure. One N-acetyl-D-glucosamine residue remains attached to the protein; the rest of the oligosaccharide is released intact. Cleaves the peptidoglycan connecting the daughter cells at the end of the cell division cycle, resulting in the separation of the two newly divided cells. Acts as an autolysin in penicillin-induced lysis. The chain is Bifunctional autolysin (atl) from Staphylococcus aureus (strain Mu3 / ATCC 700698).